A 505-amino-acid chain; its full sequence is Facilitated trehalose transporter Tret1 (505 aa).

The Cytoplasmic portion of the chain corresponds to 1–46 (MEMEIKDENLRNSVPFVRQLSTDSVKTKTEYDNEDGTPYKSTTQKL). Residues 47–67 (FLWTQLLAAFAVSVGSMNVGF) form a helical membrane-spanning segment. Topologically, residues 68 to 91 (SSGYTSPAVLTMNITLDITKEEIT) are extracellular. An N-linked (GlcNAc...) asparagine glycan is attached at N80. A helical membrane pass occupies residues 92–112 (WVGGLMPLAALVGGIVGGPLI). Residues 113–124 (EYLGRKKTIMGT) lie on the Cytoplasmic side of the membrane. The chain crosses the membrane as a helical span at residues 125-145 (AVPFTIGWMLIANAINVVMVF). Topologically, residues 146–149 (AGRV) are extracellular. The chain crosses the membrane as a helical span at residues 150-170 (ICGVCVGIVSLAFPVYIGETI). At 171–175 (QPEVR) the chain is on the cytoplasmic side. A helical transmembrane segment spans residues 176 to 196 (GALGLLPTAFGNTGILLAFLV). Residues 197-201 (GSYLD) lie on the Extracellular side of the membrane. Residues 202–222 (WSNLAFFGAAIPVPFFLLMIL) form a helical membrane-spanning segment. At 223 to 286 (TPETPRWYVS…QLFSKRYLPA (64 aa)) the chain is on the cytoplasmic side. A helical membrane pass occupies residues 287-307 (VMISLGLMLFQQLTGINAVIF). Residues 308–323 (YAASIFQMSGSSVDEN) lie on the Extracellular side of the membrane. The chain crosses the membrane as a helical span at residues 324–344 (LASIIIGVVNFISTFIATMLI). Residues 345-350 (DRLGRK) are Cytoplasmic-facing. Residues 351–371 (VLLYISSVAMITTLLALGAYF) traverse the membrane as a helical segment. Topologically, residues 372–390 (YLKQNHIDVTAYGWLPLAC) are extracellular. The helical transmembrane segment at 391–411 (LVIYVLGFSIGFGPIPWLMLG) threads the bilayer. The Cytoplasmic portion of the chain corresponds to 412–419 (EILPSKIR). A helical membrane pass occupies residues 420–437 (GTAASLATGFNWTCTFIV). Residues 438 to 451 (TKTFQNIIDAIYMH) are Extracellular-facing. A helical membrane pass occupies residues 452-472 (GTLWLFAVICIGGLLFVIFFV). Residues 473 to 505 (PETKGKSLEEIEMKLTSGSRRVRNISKQPENIC) lie on the Cytoplasmic side of the membrane.

It belongs to the major facilitator superfamily. Sugar transporter (TC 2.A.1.1) family. Trehalose transporter subfamily. In terms of tissue distribution, expressed in many larval tissues at a low level, moderate levels of expression are seen in testis and head and highest expression in muscle.

The protein localises to the cell membrane. High-capacity facilitative transporter for trehalose. Does not transport maltose, sucrose or lactose. Mediates the bidirectional transfer of trehalose. Responsible for the transport of trehalose synthesized in the fat body and the incorporation of trehalose into other tissues that require a carbon source, thereby regulating trehalose levels in the hemolymph. This is Facilitated trehalose transporter Tret1 from Bombyx mori (Silk moth).